A 553-amino-acid chain; its full sequence is Protein PALS2 (553 aa).

2 consecutive L27 domains span residues 1–48 (MQQV…EDSK) and 49–107 (LEAV…YDSP). Residues 129–208 (ILGIHKKAGE…SVTLKILPSY (80 aa)) enclose the PDZ domain. The SH3 domain maps to 228–297 (VRQVFVKCHF…PSQFLEEKRK (70 aa)). Residues 351 to 538 (RKTLVLIGAQ…AFEKLQTAIE (188 aa)) form the Guanylate kinase-like domain. Tyr-513 is modified (phosphotyrosine).

The protein belongs to the MAGUK family. As to quaternary structure, interacts with CADM1. Interacts with the LIN7 proteins.

It is found in the membrane. The sequence is that of Protein PALS2 from Mus musculus (Mouse).